The chain runs to 1093 residues: ATP-dependent helicase/deoxyribonuclease subunit B (1093 aa).

This sequence belongs to the helicase family. AddB/RexB type 2 subfamily. Heterodimer of AddA and RexB. Mg(2+) serves as cofactor.

Functionally, the heterodimer acts as both an ATP-dependent DNA helicase and an ATP-dependent, dual-direction single-stranded exonuclease. Recognizes the chi site generating a DNA molecule suitable for the initiation of homologous recombination. This subunit has 5' -&gt; 3' nuclease activity but not helicase activity. In Streptococcus sanguinis (strain SK36), this protein is ATP-dependent helicase/deoxyribonuclease subunit B.